Consider the following 381-residue polypeptide: Erythronate-4-phosphate dehydrogenase (381 aa).

S45 and T67 together coordinate substrate. NAD(+) is bound by residues 127 to 128 (QV), D147, and T176. R209 is a catalytic residue. An NAD(+)-binding site is contributed by D233. E238 is an active-site residue. Catalysis depends on H255, which acts as the Proton donor. G258 lines the NAD(+) pocket. A substrate-binding site is contributed by Y259.

It belongs to the D-isomer specific 2-hydroxyacid dehydrogenase family. PdxB subfamily. Homodimer.

It localises to the cytoplasm. It carries out the reaction 4-phospho-D-erythronate + NAD(+) = (R)-3-hydroxy-2-oxo-4-phosphooxybutanoate + NADH + H(+). It functions in the pathway cofactor biosynthesis; pyridoxine 5'-phosphate biosynthesis; pyridoxine 5'-phosphate from D-erythrose 4-phosphate: step 2/5. Its function is as follows. Catalyzes the oxidation of erythronate-4-phosphate to 3-hydroxy-2-oxo-4-phosphonooxybutanoate. The polypeptide is Erythronate-4-phosphate dehydrogenase (Vibrio cholerae serotype O1 (strain ATCC 39315 / El Tor Inaba N16961)).